The following is an 893-amino-acid chain: Protein FAM186B (893 aa).

Disordered regions lie at residues 177–207 (GWQG…TMNT), 327–376 (QAED…PSPM), 537–557 (LEKE…DVER), 574–611 (LSLV…QRPM), and 806–827 (KPKK…GPTY). Polar residues-rich tracts occupy residues 179-188 (QGRSPQTSPS) and 197-207 (QMLQDQHTMNT). The stretch at 303–331 (RYHDLLLMKQALEFQLKKAQNATGQAEDL) forms a coiled coil. Residues 342 to 353 (SERETLPRKETV) show a composition bias toward basic and acidic residues.

It belongs to the FAM186 family.

In Homo sapiens (Human), this protein is Protein FAM186B (FAM186B).